Reading from the N-terminus, the 338-residue chain is Ketol-acid reductoisomerase (NADP(+)) (338 aa).

A KARI N-terminal Rossmann domain is found at 1-181 (MKVFYDKDCD…GGGKAGIIET (181 aa)). Residues 24 to 27 (YGSQ), arginine 47, and serine 52 each bind NADP(+). The active site involves histidine 107. Position 133 (glycine 133) interacts with NADP(+). A KARI C-terminal knotted domain is found at 182–327 (NFREETETDL…EKLRAMMPWI (146 aa)). Mg(2+) is bound by residues aspartate 190, glutamate 194, glutamate 226, and glutamate 230. Serine 251 is a substrate binding site.

It belongs to the ketol-acid reductoisomerase family. The cofactor is Mg(2+).

It catalyses the reaction (2R)-2,3-dihydroxy-3-methylbutanoate + NADP(+) = (2S)-2-acetolactate + NADPH + H(+). The catalysed reaction is (2R,3R)-2,3-dihydroxy-3-methylpentanoate + NADP(+) = (S)-2-ethyl-2-hydroxy-3-oxobutanoate + NADPH + H(+). The protein operates within amino-acid biosynthesis; L-isoleucine biosynthesis; L-isoleucine from 2-oxobutanoate: step 2/4. Its pathway is amino-acid biosynthesis; L-valine biosynthesis; L-valine from pyruvate: step 2/4. In terms of biological role, involved in the biosynthesis of branched-chain amino acids (BCAA). Catalyzes an alkyl-migration followed by a ketol-acid reduction of (S)-2-acetolactate (S2AL) to yield (R)-2,3-dihydroxy-isovalerate. In the isomerase reaction, S2AL is rearranged via a Mg-dependent methyl migration to produce 3-hydroxy-3-methyl-2-ketobutyrate (HMKB). In the reductase reaction, this 2-ketoacid undergoes a metal-dependent reduction by NADPH to yield (R)-2,3-dihydroxy-isovalerate. This is Ketol-acid reductoisomerase (NADP(+)) from Polaromonas sp. (strain JS666 / ATCC BAA-500).